We begin with the raw amino-acid sequence, 1024 residues long: Gamma-tubulin complex component 5 (1024 aa).

Disordered regions lie at residues 155-203 and 521-545; these read IGPY…LDPC and TENE…SSRQ. The span at 189–203 shows a compositional bias: basic and acidic residues; it reads TPLEEQDQNRKLDPC. Residues 531–543 show a composition bias toward low complexity; sequence ASASSGSDQGPSS.

It belongs to the TUBGCP family. Component of the gamma-tubulin ring complex (gTuRC) consisting of TUBGCP2, TUBGCP3, TUBGCP4, TUBGCP5 and TUBGCP6 and gamma-tubulin TUBG1 or TUBG2. TUBGCP2, TUBGCP3, TUBGCP4, TUBGCP5 and TUBGCP6 assemble in a 5:5:2:1:1 stoichiometry; each is associated with a gamma-tubulin, thereby arranging 14 gamma-tubulins in a helical manner. Gamma-tubulin at the first position is blocked by TUBGCP3 at the last position, allowing 13 protafilaments to grow into a microtubule. The gTuRC (via TUBGCP3 and TUBGCP6) interacts with ACTB and MZT1; the interactions form a luminal bridge that stabilizes the initial structure during complex assembly. The gTuRC (via TUBGCP2) interacts with MZT2A/MZT2B and CDK5RAP2 (via CM1 motif); the interactions play a role in gTuRC activation. In terms of tissue distribution, widely expressed, with highest levels in heart and skeletal muscle and moderate levels in brain.

The protein localises to the cytoplasm. It is found in the cytoskeleton. It localises to the microtubule organizing center. The protein resides in the centrosome. In terms of biological role, component of the gamma-tubulin ring complex (gTuRC) which mediates microtubule nucleation. The gTuRC regulates the minus-end nucleation of alpha-beta tubulin heterodimers that grow into microtubule protafilaments, a critical step in centrosome duplication and spindle formation. This is Gamma-tubulin complex component 5 (TUBGCP5) from Homo sapiens (Human).